A 230-amino-acid polypeptide reads, in one-letter code: Small ribosomal subunit protein uS7m (230 aa).

The protein belongs to the universal ribosomal protein uS7 family. As to quaternary structure, part of the small ribosomal subunit.

It is found in the mitochondrion. Functionally, one of the primary rRNA binding proteins, it binds directly to 18S rRNA where it nucleates assembly of the head domain of the small subunit. The sequence is that of Small ribosomal subunit protein uS7m (RPS7) from Marchantia polymorpha (Common liverwort).